Reading from the N-terminus, the 337-residue chain is tRNA-cytidine(32) 2-sulfurtransferase (337 aa).

Positions 71-76 match the PP-loop motif motif; sequence SGGKDS. Residues C146, C149, and C237 each coordinate [4Fe-4S] cluster.

The protein belongs to the TtcA family. Homodimer. Mg(2+) is required as a cofactor. [4Fe-4S] cluster serves as cofactor.

Its subcellular location is the cytoplasm. The catalysed reaction is cytidine(32) in tRNA + S-sulfanyl-L-cysteinyl-[cysteine desulfurase] + AH2 + ATP = 2-thiocytidine(32) in tRNA + L-cysteinyl-[cysteine desulfurase] + A + AMP + diphosphate + H(+). Its pathway is tRNA modification. In terms of biological role, catalyzes the ATP-dependent 2-thiolation of cytidine in position 32 of tRNA, to form 2-thiocytidine (s(2)C32). The sulfur atoms are provided by the cysteine/cysteine desulfurase (IscS) system. This chain is tRNA-cytidine(32) 2-sulfurtransferase, found in Burkholderia vietnamiensis (strain G4 / LMG 22486) (Burkholderia cepacia (strain R1808)).